We begin with the raw amino-acid sequence, 278 residues long: MEIELAKSYGFCFGVKRAIKKAEQIKDAATIGPLIHNNEEITRLWKNYNVKTLNDISELSTEQKAIIRTHGITKQDLEKLKQKDIEIFDATCPFVTKPQKICEQMSKEGYEVVIFGDENHPEVKGVRSYVSTKAYVVLDEKELFDIKLPSKIAVVSQTTKKIEKFMEIVNFLMLKVKEVRVFNTICDATFKNQEAINELAKKSDVMVIVGGKNSANTKQLFLIAKNYCEDSYLIENEKEIQKEWFSGKEKCGVSAGASTPDWVIDLVLEKIKEYTKIN.

Residue Cys-12 participates in [4Fe-4S] cluster binding. (2E)-4-hydroxy-3-methylbut-2-enyl diphosphate is bound by residues His-36 and His-70. Positions 36 and 70 each coordinate dimethylallyl diphosphate. His-36 and His-70 together coordinate isopentenyl diphosphate. [4Fe-4S] cluster is bound at residue Cys-92. A (2E)-4-hydroxy-3-methylbut-2-enyl diphosphate-binding site is contributed by His-120. His-120 contributes to the dimethylallyl diphosphate binding site. Position 120 (His-120) interacts with isopentenyl diphosphate. Catalysis depends on Glu-122, which acts as the Proton donor. Residue Thr-158 participates in (2E)-4-hydroxy-3-methylbut-2-enyl diphosphate binding. Cys-186 lines the [4Fe-4S] cluster pocket. (2E)-4-hydroxy-3-methylbut-2-enyl diphosphate-binding residues include Ser-214, Asn-216, and Ser-258. Ser-214, Asn-216, and Ser-258 together coordinate dimethylallyl diphosphate. Residues Ser-214, Asn-216, and Ser-258 each coordinate isopentenyl diphosphate.

This sequence belongs to the IspH family. [4Fe-4S] cluster serves as cofactor.

The enzyme catalyses isopentenyl diphosphate + 2 oxidized [2Fe-2S]-[ferredoxin] + H2O = (2E)-4-hydroxy-3-methylbut-2-enyl diphosphate + 2 reduced [2Fe-2S]-[ferredoxin] + 2 H(+). It carries out the reaction dimethylallyl diphosphate + 2 oxidized [2Fe-2S]-[ferredoxin] + H2O = (2E)-4-hydroxy-3-methylbut-2-enyl diphosphate + 2 reduced [2Fe-2S]-[ferredoxin] + 2 H(+). It participates in isoprenoid biosynthesis; dimethylallyl diphosphate biosynthesis; dimethylallyl diphosphate from (2E)-4-hydroxy-3-methylbutenyl diphosphate: step 1/1. It functions in the pathway isoprenoid biosynthesis; isopentenyl diphosphate biosynthesis via DXP pathway; isopentenyl diphosphate from 1-deoxy-D-xylulose 5-phosphate: step 6/6. Catalyzes the conversion of 1-hydroxy-2-methyl-2-(E)-butenyl 4-diphosphate (HMBPP) into a mixture of isopentenyl diphosphate (IPP) and dimethylallyl diphosphate (DMAPP). Acts in the terminal step of the DOXP/MEP pathway for isoprenoid precursor biosynthesis. The chain is 4-hydroxy-3-methylbut-2-enyl diphosphate reductase from Campylobacter lari (strain RM2100 / D67 / ATCC BAA-1060).